A 550-amino-acid polypeptide reads, in one-letter code: Methionine--tRNA ligase (550 aa).

The short motif at proline 14–histidine 24 is the 'HIGH' region element. Positions 145, 148, 158, and 161 each coordinate Zn(2+). A 'KMSKS' region motif is present at residues lysine 331–serine 335. An ATP-binding site is contributed by lysine 334.

It belongs to the class-I aminoacyl-tRNA synthetase family. MetG type 1 subfamily. As to quaternary structure, monomer. Requires Zn(2+) as cofactor.

It localises to the cytoplasm. It catalyses the reaction tRNA(Met) + L-methionine + ATP = L-methionyl-tRNA(Met) + AMP + diphosphate. Is required not only for elongation of protein synthesis but also for the initiation of all mRNA translation through initiator tRNA(fMet) aminoacylation. This is Methionine--tRNA ligase from Wigglesworthia glossinidia brevipalpis.